A 245-amino-acid polypeptide reads, in one-letter code: Thiopurine S-methyltransferase (245 aa).

Residue 29 to 40 (WREKWVDGKIGF) coordinates S-adenosyl-L-methionine. Residue phenylalanine 40 coordinates substrate. Lysine 58 bears the N6-acetyllysine mark. Residues leucine 69, glutamate 90, and arginine 152 each contribute to the S-adenosyl-L-methionine site.

It belongs to the class I-like SAM-binding methyltransferase superfamily. TPMT family. In terms of assembly, monomer.

It localises to the cytoplasm. The enzyme catalyses S-adenosyl-L-methionine + a thiopurine = S-adenosyl-L-homocysteine + a thiopurine S-methylether.. The chain is Thiopurine S-methyltransferase (TPMT) from Panthera pardus (Leopard).